The chain runs to 455 residues: Bifunctional protein GlmU (455 aa).

A pyrophosphorylase region spans residues 1–226 (MGLSVVILAA…EFEILGVNDR (226 aa)). Residues 8–11 (LAAG), lysine 22, glutamine 73, 78–79 (GT), 99–101 (YGD), glycine 136, glutamate 151, asparagine 166, and asparagine 224 contribute to the UDP-N-acetyl-alpha-D-glucosamine site. A Mg(2+)-binding site is contributed by aspartate 101. Mg(2+) is bound at residue asparagine 224. The segment at 227–247 (TQLASLERVWQRNVAEKIMAK) is linker. The tract at residues 248 to 455 (GVSIADPNRF…WQRPVKKTDK (208 aa)) is N-acetyltransferase. Arginine 330 and lysine 348 together coordinate UDP-N-acetyl-alpha-D-glucosamine. Histidine 360 (proton acceptor) is an active-site residue. Residues tyrosine 363 and asparagine 374 each coordinate UDP-N-acetyl-alpha-D-glucosamine. Acetyl-CoA is bound by residues alanine 377, 383–384 (NY), serine 402, alanine 420, and arginine 437.

The protein in the N-terminal section; belongs to the N-acetylglucosamine-1-phosphate uridyltransferase family. This sequence in the C-terminal section; belongs to the transferase hexapeptide repeat family. Homotrimer. It depends on Mg(2+) as a cofactor.

It is found in the cytoplasm. It catalyses the reaction alpha-D-glucosamine 1-phosphate + acetyl-CoA = N-acetyl-alpha-D-glucosamine 1-phosphate + CoA + H(+). It carries out the reaction N-acetyl-alpha-D-glucosamine 1-phosphate + UTP + H(+) = UDP-N-acetyl-alpha-D-glucosamine + diphosphate. The protein operates within nucleotide-sugar biosynthesis; UDP-N-acetyl-alpha-D-glucosamine biosynthesis; N-acetyl-alpha-D-glucosamine 1-phosphate from alpha-D-glucosamine 6-phosphate (route II): step 2/2. It participates in nucleotide-sugar biosynthesis; UDP-N-acetyl-alpha-D-glucosamine biosynthesis; UDP-N-acetyl-alpha-D-glucosamine from N-acetyl-alpha-D-glucosamine 1-phosphate: step 1/1. It functions in the pathway bacterial outer membrane biogenesis; LPS lipid A biosynthesis. Functionally, catalyzes the last two sequential reactions in the de novo biosynthetic pathway for UDP-N-acetylglucosamine (UDP-GlcNAc). The C-terminal domain catalyzes the transfer of acetyl group from acetyl coenzyme A to glucosamine-1-phosphate (GlcN-1-P) to produce N-acetylglucosamine-1-phosphate (GlcNAc-1-P), which is converted into UDP-GlcNAc by the transfer of uridine 5-monophosphate (from uridine 5-triphosphate), a reaction catalyzed by the N-terminal domain. This Francisella tularensis subsp. novicida (strain U112) protein is Bifunctional protein GlmU.